We begin with the raw amino-acid sequence, 637 residues long: Probable potassium transport system protein Kup (637 aa).

12 helical membrane passes run Leu24–Leu44, Val64–Val84, Ala113–Ile133, Pro151–Ile171, Leu182–Ile202, Leu225–Leu245, Ala261–Ile281, Pro290–Ala310, Ile351–Phe371, Tyr381–Val401, Leu409–Asn429, and Val433–Thr453.

Belongs to the HAK/KUP transporter (TC 2.A.72) family.

It localises to the cell inner membrane. The catalysed reaction is K(+)(in) + H(+)(in) = K(+)(out) + H(+)(out). In terms of biological role, transport of potassium into the cell. Likely operates as a K(+):H(+) symporter. This is Probable potassium transport system protein Kup from Burkholderia ambifaria (strain ATCC BAA-244 / DSM 16087 / CCUG 44356 / LMG 19182 / AMMD) (Burkholderia cepacia (strain AMMD)).